The primary structure comprises 381 residues: MPFGNTHNKYKLNYKSEEEYPDLSKHNNHMAKVLTPDLYKKLRDKETPSGFTLDDVIQTGVDNPGHPFIMTVGCVAGDEESYTVFKDLFDPIIQDRHGGFKPTDKHKTDLNHENLKGGDDLDPHYVLSSRVRTGRSIKGYTLPPHCSRGERRAVEKLSVEALNSLTGEFKGKYYPLKSMTEQEQQQLIDDHFLFDKPVSPLLLASGMARDWPDARGIWHNDNKSFLVWVNEEDHLRVISMEKGGNMKEVFRRFCVGLQKIEEIFKKAGHPFMWNEHLGYVLTCPSNLGTGLRGGVHVKLAHLSKHPKFEEILTRLRLQKRGTGGVDTAAVGSVFDISNADRLGSSEVEQVQLVVDGVKLMVEMEKKLEKGQSIDDMIPAQK.

Residues 11-98 enclose the Phosphagen kinase N-terminal domain; sequence KLNYKSEEEY…FDPIIQDRHG (88 aa). One can recognise a Phosphagen kinase C-terminal domain in the interval 125–367; the sequence is YVLSSRVRTG…KLMVEMEKKL (243 aa). 128–132 is an ATP binding site; that stretch reads SSRVR. Serine 164 carries the post-translational modification Phosphoserine. Threonine 166 carries the phosphothreonine modification. Serine 178 is modified (phosphoserine). Residue threonine 180 is modified to Phosphothreonine. Histidine 191 contributes to the ATP binding site. At serine 199 the chain carries Phosphoserine. ATP is bound by residues arginine 236 and arginine 292. 2 positions are modified to phosphothreonine: threonine 313 and threonine 322. 320-325 contributes to the ATP binding site; the sequence is RGTGGV. A Phosphoserine modification is found at serine 372.

This sequence belongs to the ATP:guanido phosphotransferase family. As to quaternary structure, dimer of identical or non-identical chains, which can be either B (brain type) or M (muscle type). With MM being the major form in skeletal muscle and myocardium, MB existing in myocardium, and BB existing in many tissues, especially brain.

The enzyme catalyses creatine + ATP = N-phosphocreatine + ADP + H(+). Its function is as follows. Reversibly catalyzes the transfer of phosphate between ATP and various phosphogens (e.g. creatine phosphate). Creatine kinase isoenzymes play a central role in energy transduction in tissues with large, fluctuating energy demands, such as skeletal muscle, heart, brain and spermatozoa. The protein is Creatine kinase M-type (CKM) of Oryctolagus cuniculus (Rabbit).